The primary structure comprises 298 residues: Probable deoxyhypusine synthase 2 (298 aa).

The Nucleophile role is filled by Lys259.

Belongs to the deoxyhypusine synthase family. It depends on NAD(+) as a cofactor.

It carries out the reaction [eIF5A protein]-L-lysine + spermidine = [eIF5A protein]-deoxyhypusine + propane-1,3-diamine. Its pathway is protein modification; eIF5A hypusination. Catalyzes the NAD-dependent oxidative cleavage of spermidine and the subsequent transfer of the butylamine moiety of spermidine to the epsilon-amino group of a specific lysine residue of the eIF-5A precursor protein to form the intermediate deoxyhypusine residue. This chain is Probable deoxyhypusine synthase 2 (dys2), found in Archaeoglobus fulgidus (strain ATCC 49558 / DSM 4304 / JCM 9628 / NBRC 100126 / VC-16).